Reading from the N-terminus, the 392-residue chain is Succinate--CoA ligase [ADP-forming] subunit beta (392 aa).

Residues 9–244 form the ATP-grasp domain; sequence KALLAQYGVG…LSEEESSEIE (236 aa). Residues Lys-46, 53–55, Glu-99, Leu-102, and Glu-107 contribute to the ATP site; that span reads GRG. The Mg(2+) site is built by Asn-199 and Asp-213. Substrate contacts are provided by residues Asn-264 and 321–323; that span reads GIV.

It belongs to the succinate/malate CoA ligase beta subunit family. In terms of assembly, heterotetramer of two alpha and two beta subunits. It depends on Mg(2+) as a cofactor.

The catalysed reaction is succinate + ATP + CoA = succinyl-CoA + ADP + phosphate. The enzyme catalyses GTP + succinate + CoA = succinyl-CoA + GDP + phosphate. The protein operates within carbohydrate metabolism; tricarboxylic acid cycle; succinate from succinyl-CoA (ligase route): step 1/1. Succinyl-CoA synthetase functions in the citric acid cycle (TCA), coupling the hydrolysis of succinyl-CoA to the synthesis of either ATP or GTP and thus represents the only step of substrate-level phosphorylation in the TCA. The beta subunit provides nucleotide specificity of the enzyme and binds the substrate succinate, while the binding sites for coenzyme A and phosphate are found in the alpha subunit. This Wolinella succinogenes (strain ATCC 29543 / DSM 1740 / CCUG 13145 / JCM 31913 / LMG 7466 / NCTC 11488 / FDC 602W) (Vibrio succinogenes) protein is Succinate--CoA ligase [ADP-forming] subunit beta.